The primary structure comprises 386 residues: O-phospho-L-seryl-tRNA:Cys-tRNA synthase (386 aa).

Residues 89–90 (AR), Asn-196, and 219–221 (SGH) each bind pyridoxal 5'-phosphate. Lys-222 carries the post-translational modification N6-(pyridoxal phosphate)lysine.

This sequence belongs to the SepCysS family. Homodimer. Interacts with SepRS. Pyridoxal 5'-phosphate is required as a cofactor.

It catalyses the reaction O-phospho-L-seryl-tRNA(Cys) + hydrogen sulfide + H(+) = L-cysteinyl-tRNA(Cys) + phosphate. Its function is as follows. Converts O-phospho-L-seryl-tRNA(Cys) (Sep-tRNA(Cys)) to L-cysteinyl-tRNA(Cys) (Cys-tRNA(Cys)). The sequence is that of O-phospho-L-seryl-tRNA:Cys-tRNA synthase from Methanosarcina mazei (strain ATCC BAA-159 / DSM 3647 / Goe1 / Go1 / JCM 11833 / OCM 88) (Methanosarcina frisia).